The sequence spans 236 residues: Small ribosomal subunit protein uS2c (236 aa).

It belongs to the universal ribosomal protein uS2 family.

The protein resides in the plastid. Its subcellular location is the chloroplast. This Lotus japonicus (Lotus corniculatus var. japonicus) protein is Small ribosomal subunit protein uS2c (rps2).